Reading from the N-terminus, the 378-residue chain is REST corepressor 3 (378 aa).

An ELM2 domain is found at 1-83 (MRVGAEYQAR…KSLADLPNFT (83 aa)). Positions 84-135 (PFPDEWTVEDKVLFEQAFSFHGKSFHRIQQMLPDKTIASLVKYYYSWKKTRS) constitute an SANT domain. The segment at 147 to 219 (LANRNNQGDS…SQRSKCRPPK (73 aa)) is disordered. Over residues 162 to 184 (EPHPMDGNDSDYDPKKEAKKEGN) the composition is skewed to basic and acidic residues. Residues 205 to 217 (QHRHHSQRSKCRP) are compositionally biased toward basic residues. Residues 238–273 (ANTILRRLDMELISLKRQVQNAKQVNSALKQKMEGG) adopt a coiled-coil conformation. Residues 337-356 (TASSTSCCSCSPPSASAAPT) form a disordered region.

This sequence belongs to the CoREST family.

The protein resides in the nucleus. Its function is as follows. May act as a component of a corepressor complex that represses transcription. The chain is REST corepressor 3 (RCOR3) from Gallus gallus (Chicken).